The chain runs to 571 residues: MRTSQYLLSTQKETPADAEVISHQLMLRAGLVRKLASGLYTWLPTGLRVLNKVAQIVREEMDRAGSLEILMPVVQPADLWQESGRWDEYGPELLRIKDRHYRDFVLGPTHEEVVTALVKNEVSSYKQLPLNVYQVQTKFRDEVRPRFGVMRGREFTMKDAYSFHLSDECLNKTYDDMFAAYCRVFERINLEFRPVIADNGSIGGNASHEFHVLADSGEDDIAFSNASDYAANIEKAEALAPQFSRPAPSAELTKVATPNAKTIEQVSALLNIPAEQSVKTLIVLGEADNKGQQGLIALVLRGDHQLNELKAEKIDGVYAPLTMASEAQIEDTIGCSIGSIGPVGLNIPVIADRSAAVLADFVCGANENDVHYTGANWERDAKEFQEADIRNVQAGDPSPDGQGTLEIKRGIEVGHIFQLGSKYSEALNCGVLDENGKHQVLNMGCYGIGVSRIVAAAIEQNHDKYGIIWPDAIAPFKVAIVPMNMHKSHRIQQVAEDLYAQLKAAGVEVLFDDRKERPGVMFNDMELVGVPHTIVIGERNLDEQKVEYKNRRSGEKQLIDIPQLAEFVSTL.

It belongs to the class-II aminoacyl-tRNA synthetase family. ProS type 1 subfamily. In terms of assembly, homodimer.

It localises to the cytoplasm. It catalyses the reaction tRNA(Pro) + L-proline + ATP = L-prolyl-tRNA(Pro) + AMP + diphosphate. Its function is as follows. Catalyzes the attachment of proline to tRNA(Pro) in a two-step reaction: proline is first activated by ATP to form Pro-AMP and then transferred to the acceptor end of tRNA(Pro). As ProRS can inadvertently accommodate and process non-cognate amino acids such as alanine and cysteine, to avoid such errors it has two additional distinct editing activities against alanine. One activity is designated as 'pretransfer' editing and involves the tRNA(Pro)-independent hydrolysis of activated Ala-AMP. The other activity is designated 'posttransfer' editing and involves deacylation of mischarged Ala-tRNA(Pro). The misacylated Cys-tRNA(Pro) is not edited by ProRS. The protein is Proline--tRNA ligase of Pseudoalteromonas atlantica (strain T6c / ATCC BAA-1087).